A 77-amino-acid chain; its full sequence is Inhibitor of histone-like protein HU (77 aa).

In terms of assembly, interacts with host homodimeric histone-like protein (HU) hupA; thereby replacing dsDNA from the HU-DNA complex.

In terms of biological role, acts as a host growth inhibitor by inhibiting DNA-binding of microbial histone-like protein HU, thereby preventing chromosome segregation and causing filamentous cell morphology and growth defects in the host. The polypeptide is Inhibitor of histone-like protein HU (Bacillus phage SP01 (Bacteriophage SP01)).